The chain runs to 308 residues: Phenylcoumaran benzylic ether reductase Betv6 (308 aa).

Residues 11-17 (GGTGYIG), R36, and K45 contribute to the NADP(+) site. Residue K133 is the Proton acceptor of the active site. Position 137 (R137) interacts with NADP(+).

It belongs to the NmrA-type oxidoreductase family. Isoflavone reductase subfamily.

It carries out the reaction (-)-dehydrodiconiferyl alcohol + NADPH + H(+) = (S)-isodihydrodehydrodiconiferyl alcohol + NADP(+). It catalyses the reaction (+)-dehydrodiconiferyl alcohol + NADPH + H(+) = (R)-isodihydrodehydrodiconiferyl alcohol + NADP(+). Its function is as follows. Oxidoreductase involved in lignan biosynthesis. Catalyzes the NADPH-dependent reduction of phenylcoumaran benzylic ethers. Converts dehydrodiconiferyl alcohol (DDC) to isodihydrodehydrodiconiferyl alcohol (IDDDC). The polypeptide is Phenylcoumaran benzylic ether reductase Betv6 (Betula pendula (European white birch)).